A 124-amino-acid chain; its full sequence is Small ribosomal subunit protein uS12 (124 aa).

At Asp89 the chain carries 3-methylthioaspartic acid. Positions 105–124 (QGVKNRKQARSRYGAKKEKS) are disordered. Basic residues predominate over residues 108–118 (KNRKQARSRYG).

This sequence belongs to the universal ribosomal protein uS12 family. Part of the 30S ribosomal subunit. Contacts proteins S8 and S17. May interact with IF1 in the 30S initiation complex.

Its function is as follows. With S4 and S5 plays an important role in translational accuracy. In terms of biological role, interacts with and stabilizes bases of the 16S rRNA that are involved in tRNA selection in the A site and with the mRNA backbone. Located at the interface of the 30S and 50S subunits, it traverses the body of the 30S subunit contacting proteins on the other side and probably holding the rRNA structure together. The combined cluster of proteins S8, S12 and S17 appears to hold together the shoulder and platform of the 30S subunit. This is Small ribosomal subunit protein uS12 (rpsL) from Mycolicibacterium smegmatis (strain ATCC 700084 / mc(2)155) (Mycobacterium smegmatis).